The primary structure comprises 775 residues: Subtilisin-like protease SBT4.1 (775 aa).

The N-terminal stretch at 1–23 (MAIAFHTFLLQLLLFFFASFAEA) is a signal peptide. Asparagine 24 is a glycosylation site (N-linked (GlcNAc...) asparagine). A propeptide spans 24-106 (NDSRKTYLVQ…VSRSRNLKLQ (83 aa)) (activation peptide). Residues 29–105 (TYLVQMKVGG…EVSRSRNLKL (77 aa)) form the Inhibitor I9 domain. Residues 110–606 (SWDFMNLTLK…SGHLNATKVR (497 aa)) form the Peptidase S8 domain. 2 N-linked (GlcNAc...) asparagine glycosylation sites follow: asparagine 115 and asparagine 126. Catalysis depends on aspartate 136, which acts as the Charge relay system. N-linked (GlcNAc...) asparagine glycosylation occurs at asparagine 162. Histidine 196 functions as the Charge relay system in the catalytic mechanism. The region spanning 365 to 459 (FYPLLNEKAP…FLDEQKKGKL (95 aa)) is the PA domain. Asparagine 437 carries an N-linked (GlcNAc...) asparagine glycan. Serine 551 (charge relay system) is an active-site residue. A glycan (N-linked (GlcNAc...) asparagine) is linked at asparagine 601.

This sequence belongs to the peptidase S8 family. In terms of processing, the C-terminal propeptide is autocleaved.

Its subcellular location is the secreted. The chain is Subtilisin-like protease SBT4.1 from Arabidopsis thaliana (Mouse-ear cress).